A 129-amino-acid chain; its full sequence is Fluoride-specific ion channel FluC 2 (129 aa).

4 helical membrane passes run 3–23 (FLYVGVFGALGGMCRYAMNLW), 32–52 (ATLAVNLIGCFLLAFLMQFLA), 59–79 (LVILNGIGTGFIGAFTTFSAF), and 90–110 (GAWLFAVSYVLASFIGGLIMV). Na(+)-binding residues include Gly-71 and Thr-74.

The protein belongs to the fluoride channel Fluc/FEX (TC 1.A.43) family.

It is found in the cell membrane. It carries out the reaction fluoride(in) = fluoride(out). Na(+) is not transported, but it plays an essential structural role and its presence is essential for fluoride channel function. In terms of biological role, fluoride-specific ion channel. Important for reducing fluoride concentration in the cell, thus reducing its toxicity. The chain is Fluoride-specific ion channel FluC 2 from Listeria monocytogenes serotype 4b (strain F2365).